The sequence spans 403 residues: MSKFNRIHLVVLDSVGIGAAPDADKFFNAGVADTDSDTLGHISETAGLSVPNMAKIGLGNISRPIPLKTVPTEDNPTGYVTKLEEVSLGKDTMTGHWEIMGLNITEPFDTFWNGFPEEILTKIEEFSGRKIIREANKPYSGTAVIDDFGPRQMETGELIVYTSADPVLQIAAHEDIIPVEELYKICEYARSITLERPALLGRIIARPYVGEPGNFTRTANRHDYAVSPFQDTVLNKLADAGVPTYAVGKINDIFNGSGITNDMGHNKSNSHGIDTLIKTLQLPEFTKGFSFTNLVDFDANFGHRRDPEGYRDCLHEFDNRLPEIIANMKEDDLLLITADHGNDPTYAGTDHTREYIPLLAYSASFTGNGLIPQGHFADISATVAENFGVDTAMIGESFLGHLK.

Mn(2+)-binding residues include Asp13, Asp298, His303, Asp339, His340, and His351.

The protein belongs to the phosphopentomutase family. It depends on Mn(2+) as a cofactor.

The protein resides in the cytoplasm. It catalyses the reaction 2-deoxy-alpha-D-ribose 1-phosphate = 2-deoxy-D-ribose 5-phosphate. The enzyme catalyses alpha-D-ribose 1-phosphate = D-ribose 5-phosphate. Its pathway is carbohydrate degradation; 2-deoxy-D-ribose 1-phosphate degradation; D-glyceraldehyde 3-phosphate and acetaldehyde from 2-deoxy-alpha-D-ribose 1-phosphate: step 1/2. Its function is as follows. Isomerase that catalyzes the conversion of deoxy-ribose 1-phosphate (dRib-1-P) and ribose 1-phosphate (Rib-1-P) to deoxy-ribose 5-phosphate (dRib-5-P) and ribose 5-phosphate (Rib-5-P), respectively. The protein is Phosphopentomutase of Streptococcus pyogenes serotype M2 (strain MGAS10270).